We begin with the raw amino-acid sequence, 147 residues long: Large ribosomal subunit protein uL22 (147 aa).

The disordered stretch occupies residues 110 to 147 (EEKKTVAKKAPAAKKTTTTKAPAKKTTSTKKATAKKES). Low complexity predominate over residues 117 to 140 (KKAPAAKKTTTTKAPAKKTTSTKK).

The protein belongs to the universal ribosomal protein uL22 family. As to quaternary structure, part of the 50S ribosomal subunit.

Its function is as follows. This protein binds specifically to 23S rRNA; its binding is stimulated by other ribosomal proteins, e.g. L4, L17, and L20. It is important during the early stages of 50S assembly. It makes multiple contacts with different domains of the 23S rRNA in the assembled 50S subunit and ribosome. Functionally, the globular domain of the protein is located near the polypeptide exit tunnel on the outside of the subunit, while an extended beta-hairpin is found that lines the wall of the exit tunnel in the center of the 70S ribosome. The polypeptide is Large ribosomal subunit protein uL22 (Campylobacter jejuni subsp. jejuni serotype O:6 (strain 81116 / NCTC 11828)).